Here is a 513-residue protein sequence, read N- to C-terminus: Ferulic acid decarboxylase 1 (513 aa).

Positions 174, 197, and 240 each coordinate Mn(2+). Residues 174-179 (NWSIAR), 196-197 (QH), and Glu240 each bind prenylated FMN. Glu289 acts as the Proton donor in catalysis. Prenylated FMN is bound at residue Lys405.

Belongs to the UbiD family. UbiD-like/FDC subfamily. Homodimer. May form higher order oligomers. It depends on Mn(2+) as a cofactor. Prenylated FMN serves as cofactor.

It localises to the cytoplasm. The catalysed reaction is (E)-4-coumarate + H(+) = 4-vinylphenol + CO2. The enzyme catalyses (E)-cinnamate + H(+) = styrene + CO2. It catalyses the reaction (E)-ferulate + H(+) = 2-methoxy-4-vinylphenol + CO2. In terms of biological role, catalyzes the reversible decarboxylation of aromatic carboxylic acids like ferulic acid, p-coumaric acid or cinnamic acid, producing the corresponding vinyl derivatives 4-vinylphenol, 4-vinylguaiacol, and styrene, respectively, which play the role of aroma metabolites. The protein is Ferulic acid decarboxylase 1 of Candida dubliniensis (strain CD36 / ATCC MYA-646 / CBS 7987 / NCPF 3949 / NRRL Y-17841) (Yeast).